Reading from the N-terminus, the 604-residue chain is Elongation factor 4 (604 aa).

The region spanning 8–190 (KNKRNFSIIA…AIVHRIPAPN (183 aa)) is the tr-type G domain. Residues 20–25 (DHGKST) and 137–140 (NKID) contribute to the GTP site.

Belongs to the TRAFAC class translation factor GTPase superfamily. Classic translation factor GTPase family. LepA subfamily.

It localises to the cell inner membrane. It catalyses the reaction GTP + H2O = GDP + phosphate + H(+). Required for accurate and efficient protein synthesis under certain stress conditions. May act as a fidelity factor of the translation reaction, by catalyzing a one-codon backward translocation of tRNAs on improperly translocated ribosomes. Back-translocation proceeds from a post-translocation (POST) complex to a pre-translocation (PRE) complex, thus giving elongation factor G a second chance to translocate the tRNAs correctly. Binds to ribosomes in a GTP-dependent manner. The polypeptide is Elongation factor 4 (Fusobacterium nucleatum subsp. nucleatum (strain ATCC 25586 / DSM 15643 / BCRC 10681 / CIP 101130 / JCM 8532 / KCTC 2640 / LMG 13131 / VPI 4355)).